Reading from the N-terminus, the 887-residue chain is ABC transporter A family member 10 (887 aa).

7 helical membrane passes run 38-58, 198-218, 245-265, 277-297, 309-329, 335-355, and 376-396; these read GIQY…VITL, YLYV…LLVT, IIIV…VVLY, VMLF…GIIL, AISS…QFYL, SSWL…EFLY, and ISFL…WYIT. Residues 443-469 show a composition bias toward low complexity; that stretch reads NNCNNNNTSPSSSSSSQSSPLNKPLLS. A disordered region spans residues 443–474; that stretch reads NNCNNNNTSPSSSSSSQSSPLNKPLLSGDSDD. The ABC transporter domain occupies 481–728; the sequence is IRLVNLKKTY…FNLGYILTIV (248 aa). 519 to 526 contacts ATP; the sequence is GQNGSGKT. Low complexity predominate over residues 774-797; it reads NNNNNENNSNNSDGSSSSSDSSSS. The segment at 774–799 is disordered; sequence NNNNNENNSNNSDGSSSSSDSSSSKD.

It belongs to the ABC transporter superfamily. ABCA family.

Its subcellular location is the membrane. This is ABC transporter A family member 10 (abcA10) from Dictyostelium discoideum (Social amoeba).